We begin with the raw amino-acid sequence, 375 residues long: N-acetyldiaminopimelate deacetylase (375 aa).

The active site involves Asp69. The active-site Proton acceptor is Glu128.

This sequence belongs to the peptidase M20A family. N-acetyldiaminopimelate deacetylase subfamily.

It catalyses the reaction N-acetyl-(2S,6S)-2,6-diaminopimelate + H2O = (2S,6S)-2,6-diaminopimelate + acetate. The protein operates within amino-acid biosynthesis; L-lysine biosynthesis via DAP pathway; LL-2,6-diaminopimelate from (S)-tetrahydrodipicolinate (acetylase route): step 3/3. In terms of biological role, catalyzes the conversion of N-acetyl-diaminopimelate to diaminopimelate and acetate. This Priestia megaterium (strain ATCC 12872 / QMB1551) (Bacillus megaterium) protein is N-acetyldiaminopimelate deacetylase.